The primary structure comprises 556 residues: Arginine--tRNA ligase (556 aa).

The 'HIGH' region signature appears at 132–142; the sequence is ANPTGDLHLGH.

The protein belongs to the class-I aminoacyl-tRNA synthetase family. Monomer.

Its subcellular location is the cytoplasm. The catalysed reaction is tRNA(Arg) + L-arginine + ATP = L-arginyl-tRNA(Arg) + AMP + diphosphate. This chain is Arginine--tRNA ligase, found in Bacillus cereus (strain ATCC 14579 / DSM 31 / CCUG 7414 / JCM 2152 / NBRC 15305 / NCIMB 9373 / NCTC 2599 / NRRL B-3711).